Here is a 394-residue protein sequence, read N- to C-terminus: NAD(P)H-quinone oxidoreductase subunit H (394 aa).

Belongs to the complex I 49 kDa subunit family. NDH-1 can be composed of about 15 different subunits; different subcomplexes with different compositions have been identified which probably have different functions.

The protein localises to the cellular thylakoid membrane. It catalyses the reaction a plastoquinone + NADH + (n+1) H(+)(in) = a plastoquinol + NAD(+) + n H(+)(out). The enzyme catalyses a plastoquinone + NADPH + (n+1) H(+)(in) = a plastoquinol + NADP(+) + n H(+)(out). Functionally, NDH-1 shuttles electrons from an unknown electron donor, via FMN and iron-sulfur (Fe-S) centers, to quinones in the respiratory and/or the photosynthetic chain. The immediate electron acceptor for the enzyme in this species is believed to be plastoquinone. Couples the redox reaction to proton translocation, and thus conserves the redox energy in a proton gradient. Cyanobacterial NDH-1 also plays a role in inorganic carbon-concentration. The polypeptide is NAD(P)H-quinone oxidoreductase subunit H (Picosynechococcus sp. (strain ATCC 27264 / PCC 7002 / PR-6) (Agmenellum quadruplicatum)).